Consider the following 189-residue polypeptide: Orcokinin peptides (189 aa).

The N-terminal stretch at 1 to 21 is a signal peptide; it reads MRGAGGALAVAVAALLVCCSA. 2 propeptides span residues 22 to 124 and 145 to 174; these read DPHQ…TFVK and FYHL…PIGS.

This sequence belongs to the orcokinin family. As to expression, orcokinin-like peptide: Expressed in corpora cardiaca (CC), corpora allata (CA), antennal lobe (AL) and gnathal ganglion (GNG) (at protein level). Expression in CC, CA and GNG detected in some animals, in AL in few animals (at protein level). Orcokinin-like peptide precursor-related peptide: Expressed in corpora cardiaca (CC), corpora allata (CA), antennal lobe (AL) and gnathal ganglion (GNG) (at protein level). Expression in GNG detected in most animals, expression in CC, CA and AL detected in some animals (at protein level).

Its subcellular location is the secreted. Its function is as follows. Myotropic peptides. This is Orcokinin peptides from Agrotis ipsilon (Black cutworm moth).